Here is a 349-residue protein sequence, read N- to C-terminus: Flavonol synthase/flavanone 3-hydroxylase (349 aa).

The region spanning 213 to 310 (DIVYMLKINY…RMSWPVFLEP (98 aa)) is the Fe2OG dioxygenase domain. Positions 238, 240, and 291 each coordinate Fe cation.

This sequence belongs to the iron/ascorbate-dependent oxidoreductase family. Fe cation is required as a cofactor. Requires L-ascorbate as cofactor.

The protein resides in the cytoplasm. The catalysed reaction is a (2R,3R)-dihydroflavonol + 2-oxoglutarate + O2 = a flavonol + succinate + CO2 + H2O. It catalyses the reaction a (2S)-flavan-4-one + 2-oxoglutarate + O2 = a (2R,3R)-dihydroflavonol + succinate + CO2. It participates in secondary metabolite biosynthesis; flavonoid biosynthesis. In terms of biological role, catalyzes the formation of flavonols from dihydroflavonols. It can act on dihydrokaempferol to produce kaempferol, on dihydroquercetin to produce quercitin and on dihydromyricetin to produce myricetin. This Solanum tuberosum (Potato) protein is Flavonol synthase/flavanone 3-hydroxylase.